Here is a 518-residue protein sequence, read N- to C-terminus: Probable glycosyltransferase At5g03795 (518 aa).

Residues 1–25 (MGDEDVDGKCKNMSACSSTTSYSTK) lie on the Cytoplasmic side of the membrane. Residues 26–46 (LFLFMVPLVVISGFVFVNIGP) form a helical; Signal-anchor for type II membrane protein membrane-spanning segment. The Lumenal portion of the chain corresponds to 47–518 (KDSTSLLTSL…RRLNVKIREV (472 aa)). 5 N-linked (GlcNAc...) asparagine glycosylation sites follow: asparagine 104, asparagine 113, asparagine 120, asparagine 282, and asparagine 320.

Belongs to the glycosyltransferase 47 family.

It localises to the golgi apparatus membrane. May be involved in cell wall biosynthesis. In Arabidopsis thaliana (Mouse-ear cress), this protein is Probable glycosyltransferase At5g03795.